The chain runs to 144 residues: Probable 4-amino-4-deoxy-L-arabinose-phosphoundecaprenol flippase subunit ArnF (144 aa).

Topologically, residues 1–6 (MTHRRA) are cytoplasmic. Residues 7–24 (TLCAMASVALVSAAQLGM) traverse the membrane as a helical segment. Residues 25–56 (RWSMSRLPSPVQWLEMQEHAQLDLSALRVVCA) are Periplasmic-facing. Residues 57–77 (SITAYALSMLFWLLALRVLPL) traverse the membrane as a helical segment. The Cytoplasmic portion of the chain corresponds to 78–80 (SRA). The helical transmembrane segment at 81–101 (YSLLSISYALVYTLAATLPFF) threads the bilayer. Over 102-104 (HET) the chain is Periplasmic. A helical transmembrane segment spans residues 105–125 (FTVSKTVGVSLIVAGVLTINL). Residues 126 to 144 (RRLPRPSPQDLSHENQRFR) are Cytoplasmic-facing.

This sequence belongs to the ArnF family. Heterodimer of ArnE and ArnF.

It is found in the cell inner membrane. Its pathway is bacterial outer membrane biogenesis; lipopolysaccharide biosynthesis. In terms of biological role, translocates 4-amino-4-deoxy-L-arabinose-phosphoundecaprenol (alpha-L-Ara4N-phosphoundecaprenol) from the cytoplasmic to the periplasmic side of the inner membrane. This Pseudomonas syringae pv. syringae (strain B728a) protein is Probable 4-amino-4-deoxy-L-arabinose-phosphoundecaprenol flippase subunit ArnF.